Here is a 360-residue protein sequence, read N- to C-terminus: Aminomethyltransferase (360 aa).

The protein belongs to the GcvT family. As to quaternary structure, the glycine cleavage system is composed of four proteins: P, T, L and H.

It carries out the reaction N(6)-[(R)-S(8)-aminomethyldihydrolipoyl]-L-lysyl-[protein] + (6S)-5,6,7,8-tetrahydrofolate = N(6)-[(R)-dihydrolipoyl]-L-lysyl-[protein] + (6R)-5,10-methylene-5,6,7,8-tetrahydrofolate + NH4(+). Functionally, the glycine cleavage system catalyzes the degradation of glycine. This is Aminomethyltransferase from Pseudomonas syringae pv. tomato (strain ATCC BAA-871 / DC3000).